Here is a 258-residue protein sequence, read N- to C-terminus: Type II restriction enzyme HindII (258 aa).

It carries out the reaction Endonucleolytic cleavage of DNA to give specific double-stranded fragments with terminal 5'-phosphates.. In terms of biological role, a P subtype restriction enzyme that recognizes the double-stranded sequence 5'-GTYRAC-3' and cleaves after Y-3. This Haemophilus influenzae (strain ATCC 51907 / DSM 11121 / KW20 / Rd) protein is Type II restriction enzyme HindII (hindIIR).